An 84-amino-acid chain; its full sequence is Small ribosomal subunit protein uS17 (84 aa).

It belongs to the universal ribosomal protein uS17 family. In terms of assembly, part of the 30S ribosomal subunit.

Its function is as follows. One of the primary rRNA binding proteins, it binds specifically to the 5'-end of 16S ribosomal RNA. This Salmonella typhi protein is Small ribosomal subunit protein uS17.